A 370-amino-acid polypeptide reads, in one-letter code: 4-hydroxy-3-methylbut-2-en-1-yl diphosphate synthase (flavodoxin) (370 aa).

Cys-268, Cys-271, Cys-303, and Glu-310 together coordinate [4Fe-4S] cluster.

The protein belongs to the IspG family. [4Fe-4S] cluster is required as a cofactor.

It carries out the reaction (2E)-4-hydroxy-3-methylbut-2-enyl diphosphate + oxidized [flavodoxin] + H2O + 2 H(+) = 2-C-methyl-D-erythritol 2,4-cyclic diphosphate + reduced [flavodoxin]. Its pathway is isoprenoid biosynthesis; isopentenyl diphosphate biosynthesis via DXP pathway; isopentenyl diphosphate from 1-deoxy-D-xylulose 5-phosphate: step 5/6. Its function is as follows. Converts 2C-methyl-D-erythritol 2,4-cyclodiphosphate (ME-2,4cPP) into 1-hydroxy-2-methyl-2-(E)-butenyl 4-diphosphate. The chain is 4-hydroxy-3-methylbut-2-en-1-yl diphosphate synthase (flavodoxin) from Bacillus cereus (strain AH187).